The sequence spans 179 residues: ATP synthase subunit delta (179 aa).

The protein belongs to the ATPase delta chain family. As to quaternary structure, F-type ATPases have 2 components, F(1) - the catalytic core - and F(0) - the membrane proton channel. F(1) has five subunits: alpha(3), beta(3), gamma(1), delta(1), epsilon(1). F(0) has three main subunits: a(1), b(2) and c(10-14). The alpha and beta chains form an alternating ring which encloses part of the gamma chain. F(1) is attached to F(0) by a central stalk formed by the gamma and epsilon chains, while a peripheral stalk is formed by the delta and b chains.

The protein resides in the cell membrane. F(1)F(0) ATP synthase produces ATP from ADP in the presence of a proton or sodium gradient. F-type ATPases consist of two structural domains, F(1) containing the extramembraneous catalytic core and F(0) containing the membrane proton channel, linked together by a central stalk and a peripheral stalk. During catalysis, ATP synthesis in the catalytic domain of F(1) is coupled via a rotary mechanism of the central stalk subunits to proton translocation. Its function is as follows. This protein is part of the stalk that links CF(0) to CF(1). It either transmits conformational changes from CF(0) to CF(1) or is implicated in proton conduction. In Clostridium botulinum (strain Alaska E43 / Type E3), this protein is ATP synthase subunit delta.